Here is a 108-residue protein sequence, read N- to C-terminus: Flagellar hook-basal body complex protein FliE (108 aa).

The protein belongs to the FliE family.

Its subcellular location is the bacterial flagellum basal body. This chain is Flagellar hook-basal body complex protein FliE, found in Pseudomonas fluorescens (strain ATCC BAA-477 / NRRL B-23932 / Pf-5).